We begin with the raw amino-acid sequence, 173 residues long: uncharacterized protein (173 aa).

Disordered regions lie at residues 1-23 (MGDL…GDVA) and 48-173 (TGAA…APQR). Low complexity predominate over residues 49–60 (GAAPGSAQAGPP). The segment covering 70-83 (PRGPQAPPRLPPSL) has biased composition (pro residues). The span at 123–136 (PACAGSSAPGSPAA) shows a compositional bias: low complexity.

This is an uncharacterized protein from Homo sapiens (Human).